Reading from the N-terminus, the 624-residue chain is Glutamine--fructose-6-phosphate aminotransferase [isomerizing] (624 aa).

Cys-2 (nucleophile; for GATase activity) is an active-site residue. The region spanning 2 to 225 is the Glutamine amidotransferase type-2 domain; sequence CGIVGYVGRR…QDQAVVITAD (224 aa). 2 SIS domains span residues 297 to 436 and 469 to 614; these read SDQE…ARGT and LAHR…VDKP. Lys-619 acts as the For Fru-6P isomerization activity in catalysis.

In terms of assembly, homodimer.

It localises to the cytoplasm. It carries out the reaction D-fructose 6-phosphate + L-glutamine = D-glucosamine 6-phosphate + L-glutamate. Catalyzes the first step in hexosamine metabolism, converting fructose-6P into glucosamine-6P using glutamine as a nitrogen source. The polypeptide is Glutamine--fructose-6-phosphate aminotransferase [isomerizing] (Mycobacterium bovis (strain ATCC BAA-935 / AF2122/97)).